Reading from the N-terminus, the 297-residue chain is Acetaldehyde dehydrogenase (297 aa).

C128 (acyl-thioester intermediate) is an active-site residue. Residues 159 to 167 (SAGPGTRQN) and N272 each bind NAD(+).

This sequence belongs to the acetaldehyde dehydrogenase family.

It carries out the reaction acetaldehyde + NAD(+) + CoA = acetyl-CoA + NADH + H(+). The sequence is that of Acetaldehyde dehydrogenase from Desulfitobacterium hafniense (strain DSM 10664 / DCB-2).